The following is a 315-amino-acid chain: Cytochrome c biogenesis protein CcsA (315 aa).

The next 7 helical transmembrane spans lie at 17–37 (LGFA…WAVA), 72–92 (ISNL…AQLF), 101–121 (IVSA…SFVL), 146–166 (VIMC…GVFL), 221–241 (SITA…VWAN), 255–272 (TWAL…HTRI), and 282–302 (AILA…VNLL).

This sequence belongs to the CcmF/CycK/Ccl1/NrfE/CcsA family. May interact with ccs1.

It localises to the cellular thylakoid membrane. Required during biogenesis of c-type cytochromes (cytochrome c6 and cytochrome f) at the step of heme attachment. The polypeptide is Cytochrome c biogenesis protein CcsA (Prochlorococcus marinus (strain NATL2A)).